The chain runs to 866 residues: N-alpha-acetyltransferase 15, NatA auxiliary subunit (866 aa).

4 TPR repeats span residues 46–79 (GETLAMKGLTLNCLGKKEEAYELVRRGLRNDLKS), 80–113 (HVCWHVYGLLQRSDKKYDEAIKCYRNALKWDKDN), 148–184 (RASWIGYAIAYHLLEDYEMAAKILEEFRKTQQTSPDK), and 224–257 (LAVEETKGELLLQLCRLEDAADVYRGLQERNPEN). At Lys262 the chain carries N6-acetyllysine. At Ser302 the chain carries Phosphoserine. TPR repeat units lie at residues 374 to 407 (LWVQYYLAQHYDKIGQPSIALEYINTAIESTPTL), 409 to 441 (ELFLVKAKIYKHAGNIKEAARWMDEAQALDTAD), and 485 to 518 (MWFQTECAQAYKAMNKFGEALKKCHEIERHFIEI). Positions 500–866 (KFGEALKKCH…AEAEELANEI (367 aa)) are interaction with HYPK. A phosphoserine mark is found at Ser537 and Ser588. Residues 579-594 (EHEADTANMSDKELKK) are compositionally biased toward basic and acidic residues. The interval 579 to 642 (EHEADTANMS…EEIGGPKEEL (64 aa)) is disordered. The span at 595–604 (LRNKQRRAQK) shows a compositional bias: basic residues. A compositionally biased stretch (basic and acidic residues) spans 606-621 (AQIEEEKKNAEKEKQQ). The Bipartite nuclear localization signal signature appears at 612–629 (KKNAEKEKQQRNQKKKKD). Residues 672–705 (IETHLFAFEIYFRKEKFLLMLQSVKRAFAIDSSH) form a TPR 8 repeat. 2 positions are modified to N6-acetyllysine: Lys735 and Lys756. Phosphoserine is present on residues Ser855 and Ser856.

As to quaternary structure, component of the N-terminal acetyltransferase A complex (also called the NatA complex) composed of NAA10 and NAA15. Within the complex interacts with NAA10. Component of the N-terminal acetyltransferase A (NatA)/HYPK complex at least composed of NAA10, NAA15 and HYPK, which has N-terminal acetyltransferase activity. In complex with NAA10, interacts with HYPK. Component of the N-terminal acetyltransferase E (NatE) complex at least composed of NAA10, NAA15 and NAA50. Within the complex interacts with NAA10; the interaction is required for binding to NAA50. Interacts with NAAT50. The interaction of the NatA complex with NAA50 reduces the acetylation activity of the NatA complex. Component of the N-terminal acetyltransferase E (NatE)/HYPK complex at least composed of NAA10, NAA15, NAA50 and HYPK. In complex with NAA10 interacts with HYPK; the interaction with HYPK reduces the capacity of the NatA complex to interact with NAA50. Interacts with NAA11. Interacts with XRCC6 and XRCC5. Post-translationally, cleaved by caspases during apoptosis, resulting in a stable 35 kDa fragment. In terms of tissue distribution, expressed at high levels in testis and in ocular endothelial cells. Also found in brain (corpus callosum), heart, colon, bone marrow and at lower levels in most adult tissues, including thyroid, liver, pancreas, mammary and salivary glands, lung, ovary, urogenital system and upper gastrointestinal tract. Overexpressed in gastric cancer, in papillary thyroid carcinomas and in a Burkitt lymphoma cell line (Daudi). Specifically suppressed in abnormal proliferating blood vessels in eyes of patients with proliferative diabetic retinopathy.

It is found in the cytoplasm. The protein localises to the nucleus. In terms of biological role, auxillary subunit of N-terminal acetyltransferase complexes which display alpha (N-terminal) acetyltransferase (NAT) activity. The NAT activity may be important for vascular, hematopoietic and neuronal growth and development. Required to control retinal neovascularization in adult ocular endothelial cells. In complex with XRCC6 and XRCC5 (Ku80), up-regulates transcription from the osteocalcin promoter. The sequence is that of N-alpha-acetyltransferase 15, NatA auxiliary subunit (NAA15) from Homo sapiens (Human).